The following is a 1105-amino-acid chain: Lysylphosphatidylglycerol biosynthesis bifunctional protein LysX (1105 aa).

A phosphatidylglycerol lysyltransferase region spans residues 1–603 (MTVTKPRSVQ…LLHHDGSAPD (603 aa)). 7 helical membrane-spanning segments follow: residues 20–40 (VPAA…LASI), 62–82 (FPDT…ALAA), 86–106 (IAWL…AADI), 117–137 (FGEN…VLGY), 154–174 (AVLV…VELF), 186–203 (YVAN…DLFT), and 208–228 (VFLN…ATIV). Residues 604-1105 (VSGLRQSAIA…TLPFPLAKPH (502 aa)) are lysine--tRNA ligase. 2 residues coordinate Mg(2+): Asp1017 and Glu1024.

It in the N-terminal section; belongs to the LPG synthetase family. This sequence in the C-terminal section; belongs to the class-II aminoacyl-tRNA synthetase family. Requires Mg(2+) as cofactor.

The protein localises to the cell membrane. The enzyme catalyses tRNA(Lys) + L-lysine + ATP = L-lysyl-tRNA(Lys) + AMP + diphosphate. It catalyses the reaction L-lysyl-tRNA(Lys) + a 1,2-diacyl-sn-glycero-3-phospho-(1'-sn-glycerol) = a 1,2-diacyl-sn-glycero-3-phospho-1'-(3'-O-L-lysyl)-sn-glycerol + tRNA(Lys). In terms of biological role, catalyzes the production of L-lysyl-tRNA(Lys)transfer and the transfer of a lysyl group from L-lysyl-tRNA(Lys) to membrane-bound phosphatidylglycerol (PG), which produces lysylphosphatidylglycerol (LPG), one of the components of the bacterial membrane with a positive net charge. LPG synthesis contributes to the resistance to cationic antimicrobial peptides (CAMPs) and likely protects M.tuberculosis against the CAMPs produced by competiting microorganisms (bacteriocins). In fact, the modification of anionic phosphatidylglycerol with positively charged L-lysine results in repulsion of the peptides. In Mycobacterium marinum (strain ATCC BAA-535 / M), this protein is Lysylphosphatidylglycerol biosynthesis bifunctional protein LysX (lysX).